A 444-amino-acid polypeptide reads, in one-letter code: Phosphoglucosamine mutase (444 aa).

Residue Ser102 is the Phosphoserine intermediate of the active site. Positions 102, 241, 243, and 245 each coordinate Mg(2+). Ser102 is subject to Phosphoserine.

The protein belongs to the phosphohexose mutase family. The cofactor is Mg(2+). Post-translationally, activated by phosphorylation.

The catalysed reaction is alpha-D-glucosamine 1-phosphate = D-glucosamine 6-phosphate. Functionally, catalyzes the conversion of glucosamine-6-phosphate to glucosamine-1-phosphate. This is Phosphoglucosamine mutase from Histophilus somni (strain 2336) (Haemophilus somnus).